The chain runs to 651 residues: ATP-dependent zinc metalloprotease FtsH (651 aa).

Over 1–134 the chain is Extracellular; that stretch reads MIVFATILFG…FTTDPQTAGP (134 aa). The helical transmembrane segment at 135–155 threads the bilayer; sequence WARAIAVMAPFVLILLLFFLM. Residues 156 to 651 lie on the Cytoplasmic side of the membrane; it reads TRTGRSASQS…PAMSVNGHRG (496 aa). ATP is bound at residue 229-236; the sequence is GPPGTGKT. His451 is a Zn(2+) binding site. Residue Glu452 is part of the active site. Residues His455 and Asp527 each coordinate Zn(2+).

The protein in the central section; belongs to the AAA ATPase family. In the C-terminal section; belongs to the peptidase M41 family. In terms of assembly, homohexamer. Zn(2+) is required as a cofactor.

It localises to the cell membrane. Acts as a processive, ATP-dependent zinc metallopeptidase for both cytoplasmic and membrane proteins. Plays a role in the quality control of integral membrane proteins. In Rubrobacter xylanophilus (strain DSM 9941 / JCM 11954 / NBRC 16129 / PRD-1), this protein is ATP-dependent zinc metalloprotease FtsH.